Consider the following 638-residue polypeptide: Chaperone protein HtpG (638 aa).

Residues 1–345 are a; substrate-binding; it reads MTTETFEFQV…AQDLSLNVSR (345 aa). The tract at residues 346-560 is b; sequence EILQQDRHIR…AGELTPALEN (215 aa). The tract at residues 561–638 is c; that stretch reads MYRAMGQEVP…LMADRLERTL (78 aa).

The protein belongs to the heat shock protein 90 family. Homodimer.

It is found in the cytoplasm. Molecular chaperone. Has ATPase activity. This is Chaperone protein HtpG from Streptomyces coelicolor (strain ATCC BAA-471 / A3(2) / M145).